The sequence spans 209 residues: uncharacterized protein (209 aa).

Positions 1 to 17 (MKRLVTGLLALSLFLAA) are cleaved as a signal peptide. Residues 17–105 (ACGQDSDQQK…SNNQANNNQK (89 aa)) form a disordered region. Cysteine 18 is lipidated: N-palmitoyl cysteine. Residue cysteine 18 is the site of S-diacylglycerol cysteine attachment. Residues 23–70 (DQQKDSNKEKDDKAKTEQQDEKTNDSSKDKKDKKDDSKDVNKDNKDNS) show a composition bias toward basic and acidic residues. Residues 71–105 (ANDNQQQSNSNATNNDQNQTNNNQSSNNQANNNQK) show a composition bias toward low complexity.

The protein localises to the cell membrane. This is an uncharacterized protein from Staphylococcus aureus (strain bovine RF122 / ET3-1).